A 123-amino-acid chain; its full sequence is Large ribosomal subunit protein bL19 (123 aa).

Belongs to the bacterial ribosomal protein bL19 family.

Functionally, this protein is located at the 30S-50S ribosomal subunit interface and may play a role in the structure and function of the aminoacyl-tRNA binding site. The polypeptide is Large ribosomal subunit protein bL19 (Thermomicrobium roseum (strain ATCC 27502 / DSM 5159 / P-2)).